The sequence spans 32 residues: Calcitonin-2 (32 aa).

A disulfide bridge links C1 with C7. P32 is modified (proline amide).

The protein belongs to the calcitonin family.

Its subcellular location is the secreted. Its function is as follows. Causes a rapid but short-lived drop in the level of calcium and phosphate in blood by promoting the incorporation of those ions in the bones. This chain is Calcitonin-2, found in Oncorhynchus gorbuscha (Pink salmon).